Reading from the N-terminus, the 133-residue chain is Large ribosomal subunit protein bL17 (133 aa).

Belongs to the bacterial ribosomal protein bL17 family. As to quaternary structure, part of the 50S ribosomal subunit. Contacts protein L32.

The chain is Large ribosomal subunit protein bL17 from Pseudoalteromonas translucida (strain TAC 125).